The following is a 98-amino-acid chain: Integration host factor subunit beta (98 aa).

Belongs to the bacterial histone-like protein family. In terms of assembly, heterodimer of an alpha and a beta chain.

In terms of biological role, this protein is one of the two subunits of integration host factor, a specific DNA-binding protein that functions in genetic recombination as well as in transcriptional and translational control. The polypeptide is Integration host factor subunit beta (Marinobacter nauticus (strain ATCC 700491 / DSM 11845 / VT8) (Marinobacter aquaeolei)).